The following is a 168-amino-acid chain: 3-isopropylmalate dehydratase small subunit (168 aa).

This sequence belongs to the LeuD family. LeuD type 2 subfamily. In terms of assembly, heterodimer of LeuC and LeuD.

The catalysed reaction is (2R,3S)-3-isopropylmalate = (2S)-2-isopropylmalate. It functions in the pathway amino-acid biosynthesis; L-leucine biosynthesis; L-leucine from 3-methyl-2-oxobutanoate: step 2/4. Functionally, catalyzes the isomerization between 2-isopropylmalate and 3-isopropylmalate, via the formation of 2-isopropylmaleate. The chain is 3-isopropylmalate dehydratase small subunit (leuD) from Sulfurisphaera tokodaii (strain DSM 16993 / JCM 10545 / NBRC 100140 / 7) (Sulfolobus tokodaii).